The following is a 657-amino-acid chain: UvrABC system protein B (657 aa).

A Helicase ATP-binding domain is found at K25–R182. G38 to T45 is a binding site for ATP. Residues Y91–I114 carry the Beta-hairpin motif. The region spanning Q429–I595 is the Helicase C-terminal domain. The UVR domain occupies K621–K656.

The protein belongs to the UvrB family. Forms a heterotetramer with UvrA during the search for lesions. Interacts with UvrC in an incision complex.

It is found in the cytoplasm. In terms of biological role, the UvrABC repair system catalyzes the recognition and processing of DNA lesions. A damage recognition complex composed of 2 UvrA and 2 UvrB subunits scans DNA for abnormalities. Upon binding of the UvrA(2)B(2) complex to a putative damaged site, the DNA wraps around one UvrB monomer. DNA wrap is dependent on ATP binding by UvrB and probably causes local melting of the DNA helix, facilitating insertion of UvrB beta-hairpin between the DNA strands. Then UvrB probes one DNA strand for the presence of a lesion. If a lesion is found the UvrA subunits dissociate and the UvrB-DNA preincision complex is formed. This complex is subsequently bound by UvrC and the second UvrB is released. If no lesion is found, the DNA wraps around the other UvrB subunit that will check the other stand for damage. This Clostridium botulinum (strain Alaska E43 / Type E3) protein is UvrABC system protein B.